We begin with the raw amino-acid sequence, 636 residues long: 1-deoxy-D-xylulose-5-phosphate synthase (636 aa).

Thiamine diphosphate contacts are provided by residues H75 and 116–118 (AHS). Mg(2+) is bound at residue D147. Thiamine diphosphate-binding positions include 148–149 (GA), N177, Y288, and E370. N177 provides a ligand contact to Mg(2+).

This sequence belongs to the transketolase family. DXPS subfamily. In terms of assembly, homodimer. The cofactor is Mg(2+). It depends on thiamine diphosphate as a cofactor.

It catalyses the reaction D-glyceraldehyde 3-phosphate + pyruvate + H(+) = 1-deoxy-D-xylulose 5-phosphate + CO2. Its pathway is metabolic intermediate biosynthesis; 1-deoxy-D-xylulose 5-phosphate biosynthesis; 1-deoxy-D-xylulose 5-phosphate from D-glyceraldehyde 3-phosphate and pyruvate: step 1/1. In terms of biological role, catalyzes the acyloin condensation reaction between C atoms 2 and 3 of pyruvate and glyceraldehyde 3-phosphate to yield 1-deoxy-D-xylulose-5-phosphate (DXP). The sequence is that of 1-deoxy-D-xylulose-5-phosphate synthase from Ralstonia pickettii (strain 12J).